A 312-amino-acid chain; its full sequence is Olfactory receptor 1D2 (312 aa).

Residues 1–25 (MDGGNQSEGSEFLLLGMSESPEQQR) are Extracellular-facing. Residue N5 is glycosylated (N-linked (GlcNAc...) asparagine). A helical transmembrane segment spans residues 26–49 (ILFWMFLSMYLVTVVGNVLIILAI). At 50–57 (SSDSCLHT) the chain is on the cytoplasmic side. A helical membrane pass occupies residues 58–79 (PMYFFLANLSFTDLFFVTNTIP). The Extracellular segment spans residues 80 to 100 (KMLVNLQSQNKAISYAGCLTQ). Cysteines 97 and 189 form a disulfide. A helical membrane pass occupies residues 101–120 (LYFLVSLVALDNLILAVMAY). Residues 121 to 139 (DRYVAICCPLHYTTAMSPK) are Cytoplasmic-facing. The chain crosses the membrane as a helical span at residues 140–158 (LCILLLSLCWVLSVLYGLI). Topologically, residues 159–196 (HTLLMTRVTFCGSRKIHYIFCEMYVLLRMACSNIQTNH) are extracellular. An N-linked (GlcNAc...) asparagine glycan is attached at N195. Residues 197–219 (TVLIATGCFIFLIPFGFVIISYV) form a helical membrane-spanning segment. At 220 to 236 (LIIRAILRIPSLSKKYK) the chain is on the cytoplasmic side. A helical transmembrane segment spans residues 237 to 259 (AFSTCASHLGAVSLFYGTLCMVY). The Extracellular segment spans residues 260–271 (LKPLHTYSVKDS). The chain crosses the membrane as a helical span at residues 272 to 291 (VATVMYAVVTPMMNPFIYSL). The Cytoplasmic segment spans residues 292 to 312 (RNKDMHGALGRLLDKHFKRLT).

It belongs to the G-protein coupled receptor 1 family.

It is found in the cell membrane. In terms of biological role, odorant receptor. The chain is Olfactory receptor 1D2 (OR1D2) from Pan troglodytes (Chimpanzee).